The primary structure comprises 241 residues: Acetoacetyl-CoA reductase (241 aa).

NADP(+) contacts are provided by residues 12-14 (RGI), Arg39, and 82-86 (NAGIT). Residues Asp88 and 141 to 144 (QMGQ) contribute to the substrate site. The active-site Proton acceptor is the Tyr147. 177–180 (PGYI) serves as a coordination point for NADP(+). 178-179 (GY) contributes to the substrate binding site.

Belongs to the short-chain dehydrogenases/reductases (SDR) family.

The protein localises to the cytoplasm. The enzyme catalyses a (3R)-3-hydroxyacyl-CoA + NADP(+) = a 3-oxoacyl-CoA + NADPH + H(+). The protein operates within biopolymer metabolism; poly-(R)-3-hydroxybutanoate biosynthesis. The sequence is that of Acetoacetyl-CoA reductase from Rhizobium meliloti (strain 1021) (Ensifer meliloti).